Here is a 216-residue protein sequence, read N- to C-terminus: Elongation factor 1-beta (216 aa).

Residues 71-131 (GQASGVSASS…AKKKESGKSS (61 aa)) form a disordered region. Residues 73-89 (ASGVSASSAPAAAAPAA) are compositionally biased toward low complexity. Acidic residues predominate over residues 92–107 (DEDDDDDMDLFGDETE). Positions 108–128 (EDKKAAAEREAAKPAKKKESG) are enriched in basic and acidic residues.

It belongs to the EF-1-beta/EF-1-delta family. EF-1 is composed of 4 subunits: alpha, beta (1B-alpha=beta'), delta (1B-beta), and gamma (1B-gamma).

EF-1-beta and EF-1-beta' stimulate the exchange of GDP bound to EF-1-alpha to GTP. This Triticum aestivum (Wheat) protein is Elongation factor 1-beta.